The chain runs to 20 residues: Apidaecin 3+ (20 aa).

The tract at residues 1–20 (GKPSRPRPAPIQPRPPHPRL) is disordered.

This sequence belongs to the apidaecin family.

Its subcellular location is the secreted. In terms of biological role, antimicrobial peptide active against many Gram-negative enterobacterial and plant-associated bacterial species. Not active against other bacterial species like H.pylori, P.mirabilis, B.pertussis or N.gonorrhoeae. Functionally, among others, also active against S.typhi. Not active against S.typhi. In Pimpla disparis (Parasitic wasp), this protein is Apidaecin 3+.